The sequence spans 251 residues: MLLIPAIDLKDGQCVRLKQGDMDQATIFSEDPAAMARKWVDLGARRLHLVDLNGAFAGKPKNLEAIEAILDEVGDEIPVQLGGGIRSLETIEKYLDAGLSYVIIGTAAVKNPGFLQDACTAFSGSIIVGLDAKDGKVATDGWSKLTGHEVIDLAKKFEDYGVESIVYTDIGRDGMLQGINIDATVKLAQAVGIPVIASGGLSNLPDIESLCEVEEHGVEGVICGRAIYSGDLDFAAAQKRADELNGELDNA.

D8 functions as the Proton acceptor in the catalytic mechanism. Residue D131 is the Proton donor of the active site.

The protein belongs to the HisA/HisF family.

It localises to the cytoplasm. The enzyme catalyses 1-(5-phospho-beta-D-ribosyl)-5-[(5-phospho-beta-D-ribosylamino)methylideneamino]imidazole-4-carboxamide = 5-[(5-phospho-1-deoxy-D-ribulos-1-ylimino)methylamino]-1-(5-phospho-beta-D-ribosyl)imidazole-4-carboxamide. The protein operates within amino-acid biosynthesis; L-histidine biosynthesis; L-histidine from 5-phospho-alpha-D-ribose 1-diphosphate: step 4/9. The polypeptide is 1-(5-phosphoribosyl)-5-[(5-phosphoribosylamino)methylideneamino] imidazole-4-carboxamide isomerase (Burkholderia cenocepacia (strain HI2424)).